The following is a 710-amino-acid chain: Integrator complex subunit 10 (710 aa).

Phosphoserine occurs at positions 231, 381, and 382. Lysine 464 participates in a covalent cross-link: Glycyl lysine isopeptide (Lys-Gly) (interchain with G-Cter in SUMO2).

This sequence belongs to the Integrator subunit 10 family. Component of the Integrator complex, composed of core subunits INTS1, INTS2, INTS3, INTS4, INTS5, INTS6, INTS7, INTS8, INTS9/RC74, INTS10, INTS11/CPSF3L, INTS12, INTS13, INTS14 and INTS15. The core complex associates with protein phosphatase 2A subunits PPP2CA and PPP2R1A, to form the Integrator-PP2A (INTAC) complex. INTS10 is part of the tail subcomplex, composed of INTS10, INTS13, INTS14 and INTS15.

It localises to the nucleus. Component of the integrator complex, a multiprotein complex that terminates RNA polymerase II (Pol II) transcription in the promoter-proximal region of genes. The integrator complex provides a quality checkpoint during transcription elongation by driving premature transcription termination of transcripts that are unfavorably configured for transcriptional elongation: the complex terminates transcription by (1) catalyzing dephosphorylation of the C-terminal domain (CTD) of Pol II subunit POLR2A/RPB1 and SUPT5H/SPT5, (2) degrading the exiting nascent RNA transcript via endonuclease activity and (3) promoting the release of Pol II from bound DNA. The integrator complex is also involved in terminating the synthesis of non-coding Pol II transcripts, such as enhancer RNAs (eRNAs), small nuclear RNAs (snRNAs), telomerase RNAs and long non-coding RNAs (lncRNAs). Within the integrator complex, INTS10 is part of the integrator tail module that acts as a platform for the recruitment of transcription factors at promoters. May be not involved in the recruitment of cytoplasmic dynein to the nuclear envelope, probably as component of the integrator complex. This chain is Integrator complex subunit 10 (Ints10), found in Mus musculus (Mouse).